The chain runs to 382 residues: Fetuin-B (382 aa).

An N-terminal signal peptide occupies residues 1–15 (MGLLLPLALCILVLC). 2 consecutive Cystatin fetuin-B-type domains span residues 25-138 (ALNP…YNCT) and 149-255 (MTCP…VTCD). The N-linked (GlcNAc...) asparagine glycan is linked to N37. Intrachain disulfides connect C93-C104, C117-C137, and C151-C154. An N-linked (GlcNAc...) asparagine glycan is attached at N136. The N-linked (GlcNAc...) asparagine glycan is linked to N182. Disulfide bonds link C216/C224 and C237/C254. Polar residues-rich tracts occupy residues 262–276 (PATGSENSAVNQKPT) and 286–295 (QKNTPPTDSP). Disordered regions lie at residues 262–320 (PATG…EKGP) and 363–382 (ARTAECPGPAQNASPLVLPP). O-linked (GalNAc...) threonine glycosylation is found at T289 and T292. Residues 310–320 (LDDKNSQEKGP) are compositionally biased toward basic and acidic residues. Position 315 is a phosphoserine (S315).

It belongs to the fetuin family. In terms of tissue distribution, liver and testis.

The protein resides in the secreted. Functionally, protease inhibitor required for egg fertilization. Required to prevent premature zona pellucida hardening before fertilization, probably by inhibiting the protease activity of ASTL, a protease that mediates the cleavage of ZP2 and triggers zona pellucida hardening. This Homo sapiens (Human) protein is Fetuin-B (FETUB).